The sequence spans 95 residues: Large ribosomal subunit protein uL23 (95 aa).

The protein belongs to the universal ribosomal protein uL23 family. In terms of assembly, contacts protein L29, and trigger factor when it is bound to the ribosome. Part of the 50S ribosomal subunit.

One of the early assembly proteins it binds 23S rRNA. One of the proteins that surrounds the polypeptide exit tunnel on the outside of the ribosome. Forms the main docking site for trigger factor binding to the ribosome. The polypeptide is Large ribosomal subunit protein uL23 (Geobacillus stearothermophilus (Bacillus stearothermophilus)).